We begin with the raw amino-acid sequence, 308 residues long: UDP-N-acetylenolpyruvoylglucosamine reductase (308 aa).

One can recognise an FAD-binding PCMH-type domain in the interval 22–185; the sequence is RVGGPADWLF…VEAAFRADAG (164 aa). Residue R165 is part of the active site. Residues 197–211 show a composition bias toward basic and acidic residues; that stretch reads QIARRDSSQPTRDRS. The interval 197-228 is disordered; that stretch reads QIARRDSSQPTRDRSAGSTFRNPAGFSSTGRA. A compositionally biased stretch (polar residues) spans 212-226; it reads AGSTFRNPAGFSSTG. S214 (proton donor) is an active-site residue. The active site involves E296.

Belongs to the MurB family. Requires FAD as cofactor.

It is found in the cytoplasm. It carries out the reaction UDP-N-acetyl-alpha-D-muramate + NADP(+) = UDP-N-acetyl-3-O-(1-carboxyvinyl)-alpha-D-glucosamine + NADPH + H(+). The protein operates within cell wall biogenesis; peptidoglycan biosynthesis. Functionally, cell wall formation. This is UDP-N-acetylenolpyruvoylglucosamine reductase from Cereibacter sphaeroides (strain ATCC 17025 / ATH 2.4.3) (Rhodobacter sphaeroides).